A 120-amino-acid polypeptide reads, in one-letter code: NAD(P)H-quinone oxidoreductase subunit 3, chloroplastic (120 aa).

The next 3 helical transmembrane spans lie at 9 to 29 (IFWA…TISG), 64 to 84 (MFAL…PWAM), and 88 to 108 (VLGI…IVGS).

The protein belongs to the complex I subunit 3 family. As to quaternary structure, NDH is composed of at least 16 different subunits, 5 of which are encoded in the nucleus.

It is found in the plastid. It localises to the chloroplast thylakoid membrane. It carries out the reaction a plastoquinone + NADH + (n+1) H(+)(in) = a plastoquinol + NAD(+) + n H(+)(out). It catalyses the reaction a plastoquinone + NADPH + (n+1) H(+)(in) = a plastoquinol + NADP(+) + n H(+)(out). Functionally, NDH shuttles electrons from NAD(P)H:plastoquinone, via FMN and iron-sulfur (Fe-S) centers, to quinones in the photosynthetic chain and possibly in a chloroplast respiratory chain. The immediate electron acceptor for the enzyme in this species is believed to be plastoquinone. Couples the redox reaction to proton translocation, and thus conserves the redox energy in a proton gradient. The polypeptide is NAD(P)H-quinone oxidoreductase subunit 3, chloroplastic (Lotus japonicus (Lotus corniculatus var. japonicus)).